The primary structure comprises 311 residues: tRNA pseudouridine synthase B (311 aa).

D39 acts as the Nucleophile in catalysis. Residues 237–268 are disordered; the sequence is RELSEQETTEISFGRRIAAGPGAGTPDAATAE. A compositionally biased stretch (low complexity) spans 254 to 268; sequence AAGPGAGTPDAATAE.

This sequence belongs to the pseudouridine synthase TruB family. Type 1 subfamily.

It carries out the reaction uridine(55) in tRNA = pseudouridine(55) in tRNA. In terms of biological role, responsible for synthesis of pseudouridine from uracil-55 in the psi GC loop of transfer RNAs. This is tRNA pseudouridine synthase B from Paenarthrobacter aurescens (strain TC1).